We begin with the raw amino-acid sequence, 332 residues long: Glycerol-3-phosphate dehydrogenase [NAD(P)+] (332 aa).

Trp-13, Lys-34, and Lys-108 together coordinate NADPH. Sn-glycerol 3-phosphate is bound by residues Lys-108, Gly-136, and Ser-138. Ala-140 provides a ligand contact to NADPH. Residues Lys-191, Asp-244, Ser-254, Arg-255, and Asn-256 each coordinate sn-glycerol 3-phosphate. Lys-191 functions as the Proton acceptor in the catalytic mechanism. Arg-255 contacts NADPH. Positions 279 and 281 each coordinate NADPH.

It belongs to the NAD-dependent glycerol-3-phosphate dehydrogenase family.

It is found in the cytoplasm. It catalyses the reaction sn-glycerol 3-phosphate + NAD(+) = dihydroxyacetone phosphate + NADH + H(+). The enzyme catalyses sn-glycerol 3-phosphate + NADP(+) = dihydroxyacetone phosphate + NADPH + H(+). It functions in the pathway membrane lipid metabolism; glycerophospholipid metabolism. Functionally, catalyzes the reduction of the glycolytic intermediate dihydroxyacetone phosphate (DHAP) to sn-glycerol 3-phosphate (G3P), the key precursor for phospholipid synthesis. This chain is Glycerol-3-phosphate dehydrogenase [NAD(P)+], found in Francisella tularensis subsp. mediasiatica (strain FSC147).